A 129-amino-acid polypeptide reads, in one-letter code: Large ribosomal subunit protein bL17 (129 aa).

This sequence belongs to the bacterial ribosomal protein bL17 family. Part of the 50S ribosomal subunit. Contacts protein L32.

The polypeptide is Large ribosomal subunit protein bL17 (Pseudomonas aeruginosa (strain UCBPP-PA14)).